Reading from the N-terminus, the 150-residue chain is Arginine repressor (150 aa).

It belongs to the ArgR family.

It localises to the cytoplasm. It participates in amino-acid biosynthesis; L-arginine biosynthesis [regulation]. In terms of biological role, regulates arginine biosynthesis genes. The protein is Arginine repressor of Clostridium beijerinckii (strain ATCC 51743 / NCIMB 8052) (Clostridium acetobutylicum).